A 279-amino-acid polypeptide reads, in one-letter code: 4-hydroxy-3-methylbut-2-enyl diphosphate reductase (279 aa).

C12 provides a ligand contact to [4Fe-4S] cluster. 2 residues coordinate (2E)-4-hydroxy-3-methylbut-2-enyl diphosphate: H41 and H74. H41 and H74 together coordinate dimethylallyl diphosphate. Isopentenyl diphosphate is bound by residues H41 and H74. A [4Fe-4S] cluster-binding site is contributed by C96. A (2E)-4-hydroxy-3-methylbut-2-enyl diphosphate-binding site is contributed by H124. Residue H124 coordinates dimethylallyl diphosphate. H124 contacts isopentenyl diphosphate. E126 functions as the Proton donor in the catalytic mechanism. Residue T164 coordinates (2E)-4-hydroxy-3-methylbut-2-enyl diphosphate. C192 provides a ligand contact to [4Fe-4S] cluster. The (2E)-4-hydroxy-3-methylbut-2-enyl diphosphate site is built by S220, S221, N222, and S263. Dimethylallyl diphosphate contacts are provided by S220, S221, N222, and S263. Isopentenyl diphosphate-binding residues include S220, S221, N222, and S263.

The protein belongs to the IspH family. [4Fe-4S] cluster is required as a cofactor.

It carries out the reaction isopentenyl diphosphate + 2 oxidized [2Fe-2S]-[ferredoxin] + H2O = (2E)-4-hydroxy-3-methylbut-2-enyl diphosphate + 2 reduced [2Fe-2S]-[ferredoxin] + 2 H(+). The catalysed reaction is dimethylallyl diphosphate + 2 oxidized [2Fe-2S]-[ferredoxin] + H2O = (2E)-4-hydroxy-3-methylbut-2-enyl diphosphate + 2 reduced [2Fe-2S]-[ferredoxin] + 2 H(+). Its pathway is isoprenoid biosynthesis; dimethylallyl diphosphate biosynthesis; dimethylallyl diphosphate from (2E)-4-hydroxy-3-methylbutenyl diphosphate: step 1/1. It participates in isoprenoid biosynthesis; isopentenyl diphosphate biosynthesis via DXP pathway; isopentenyl diphosphate from 1-deoxy-D-xylulose 5-phosphate: step 6/6. Catalyzes the conversion of 1-hydroxy-2-methyl-2-(E)-butenyl 4-diphosphate (HMBPP) into a mixture of isopentenyl diphosphate (IPP) and dimethylallyl diphosphate (DMAPP). Acts in the terminal step of the DOXP/MEP pathway for isoprenoid precursor biosynthesis. This Clostridioides difficile (strain 630) (Peptoclostridium difficile) protein is 4-hydroxy-3-methylbut-2-enyl diphosphate reductase.